Reading from the N-terminus, the 545-residue chain is Membrane protein insertase YidC (545 aa).

The chain crosses the membrane as a helical span at residues 6-26; it reads LILFSALVLVLFLMWDAWQTD. The tract at residues 34–59 is disordered; the sequence is PPPPQPTASSGESSPVLPEAVPDAPP. Helical transmembrane passes span 357-377, 428-448, and 505-525; these read LVGN…LVFF, GGCL…WMLL, and PVMF…YWVV.

Belongs to the OXA1/ALB3/YidC family. Type 1 subfamily. As to quaternary structure, interacts with the Sec translocase complex via SecD. Specifically interacts with transmembrane segments of nascent integral membrane proteins during membrane integration.

The protein resides in the cell inner membrane. In terms of biological role, required for the insertion and/or proper folding and/or complex formation of integral membrane proteins into the membrane. Involved in integration of membrane proteins that insert both dependently and independently of the Sec translocase complex, as well as at least some lipoproteins. Aids folding of multispanning membrane proteins. This Nitrosococcus oceani (strain ATCC 19707 / BCRC 17464 / JCM 30415 / NCIMB 11848 / C-107) protein is Membrane protein insertase YidC.